The chain runs to 382 residues: L-arabinitol 4-dehydrogenase (382 aa).

Zn(2+) contacts are provided by Cys55, His80, Glu81, Cys110, Cys113, Cys116, Cys124, and Glu165. NAD(+) contacts are provided by residues 192 to 193 (PI), Asp213, Arg218, Ile293, and 317 to 319 (QYR).

The protein belongs to the zinc-containing alcohol dehydrogenase family. Homotetramer. Requires Zn(2+) as cofactor.

The catalysed reaction is L-arabinitol + NAD(+) = L-xylulose + NADH + H(+). Its pathway is carbohydrate degradation; L-arabinose degradation via L-arabinitol; D-xylulose 5-phosphate from L-arabinose (fungal route): step 2/5. Its function is as follows. Catalyzes the NAD-dependent oxidation of L-arabinitol to L-xylulose in the fungal L-arabinose catabolic pathway. L-arabinose catabolism is important for using plant material as a carbon source. Also active on ribitol and xylitol. Not active with NADP as cosubstrate. The sequence is that of L-arabinitol 4-dehydrogenase (ladA) from Aspergillus oryzae (Yellow koji mold).